A 475-amino-acid chain; its full sequence is Ankyrin repeat, SAM and basic leucine zipper domain-containing protein 1 (475 aa).

Serine 17, serine 18, and serine 20 each carry phosphoserine. ANK repeat units lie at residues 45 to 74 (EKNETFKKALTTGDISLVQELLDSGISVES), 78 to 107 (YGWTPLMYAASVSNVELVRVLLDRGANASF), 110 to 144 (DKQTILITACSARGSEEQILKCVELLLSRNADPNV), 148 to 177 (RLMTPIMYAARDGHPQVVALLVAHGAEVNS), 181 to 210 (NGYTALTWAARQGHKNVVLKLLELGANKML), and 214 to 243 (DGKTPSEIAKRNKHLEIFNFLSLTLNPLEG). Residues 272–334 (SYTAFGDLEI…KILAALKELE (63 aa)) enclose the SAM domain.

As to quaternary structure, interacts with DDX4, PIWIL1, RANBP9 and TDRD1.

It localises to the cytoplasm. In terms of biological role, plays a central role during spermatogenesis by repressing transposable elements and preventing their mobilization, which is essential for the germline integrity. Acts via the piRNA metabolic process, which mediates the repression of transposable elements during meiosis by forming complexes composed of piRNAs and Piwi proteins and governs the methylation and subsequent repression of transposons. Its association with pi-bodies suggests a participation in the primary piRNAs metabolic process. Required prior to the pachytene stage to facilitate the production of multiple types of piRNAs, including those associated with repeats involved in the regulation of retrotransposons. May act by mediating protein-protein interactions during germ cell maturation. In Mustela putorius furo (European domestic ferret), this protein is Ankyrin repeat, SAM and basic leucine zipper domain-containing protein 1 (ASZ1).